An 82-amino-acid chain; its full sequence is MVDINQIPTRRPFHRRRKTCPFSGANAPKIDYKDVRLLQRYISERGKIVPSRITAVSQKKQRELAKAIKRARFLGLLPYVVR.

Positions 1–20 are disordered; it reads MVDINQIPTRRPFHRRRKTC.

It belongs to the bacterial ribosomal protein bS18 family. As to quaternary structure, part of the 30S ribosomal subunit. Forms a tight heterodimer with protein bS6.

Binds as a heterodimer with protein bS6 to the central domain of the 16S rRNA, where it helps stabilize the platform of the 30S subunit. In Mesorhizobium japonicum (strain LMG 29417 / CECT 9101 / MAFF 303099) (Mesorhizobium loti (strain MAFF 303099)), this protein is Small ribosomal subunit protein bS18.